Reading from the N-terminus, the 292-residue chain is Protoheme IX farnesyltransferase (292 aa).

Helical transmembrane passes span 15 to 35 (YLVLTKPGIVSLVLITTLGGM), 49 to 69 (FWTLLGTGLAAAGSAVLNMVI), 104 to 124 (VFSLVIMLTFVGVLPALLVAL), 147 to 167 (IGGISGALPPVIGYVAASGSV), 171 to 191 (AIALFLLMFMWQPPHFWVLAL), 218 to 238 (TLLYTASLFPVSLIPYLTGLV), 242 to 262 (YFVVAVVMNLIYLGLTLKFFF), and 271 to 291 (LFFFSIIYLAVLFGTMIVDMV).

This sequence belongs to the UbiA prenyltransferase family. Protoheme IX farnesyltransferase subfamily.

It localises to the cell inner membrane. It carries out the reaction heme b + (2E,6E)-farnesyl diphosphate + H2O = Fe(II)-heme o + diphosphate. It participates in porphyrin-containing compound metabolism; heme O biosynthesis; heme O from protoheme: step 1/1. Functionally, converts heme B (protoheme IX) to heme O by substitution of the vinyl group on carbon 2 of heme B porphyrin ring with a hydroxyethyl farnesyl side group. The protein is Protoheme IX farnesyltransferase of Aquifex aeolicus (strain VF5).